The primary structure comprises 202 residues: LexA repressor 1 (202 aa).

A DNA-binding region (H-T-H motif) is located at residues 28-48 (RAEIAQELGFKSPNAAEEHLK). Catalysis depends on for autocatalytic cleavage activity residues serine 123 and lysine 160.

The protein belongs to the peptidase S24 family. As to quaternary structure, homodimer.

The enzyme catalyses Hydrolysis of Ala-|-Gly bond in repressor LexA.. Its function is as follows. Represses a number of genes involved in the response to DNA damage (SOS response), including recA and lexA. In the presence of single-stranded DNA, RecA interacts with LexA causing an autocatalytic cleavage which disrupts the DNA-binding part of LexA, leading to derepression of the SOS regulon and eventually DNA repair. The protein is LexA repressor 1 of Pseudomonas syringae pv. tomato (strain ATCC BAA-871 / DC3000).